Consider the following 200-residue polypeptide: Troponin I-like protein (200 aa).

Disordered regions lie at residues 1-20 (MGDE…AEVR) and 181-200 (ENKA…ENEE). The stretch at 2–116 (GDEEKRKMEE…EDAKYDLEYE (115 aa)) forms a coiled coil.

The protein belongs to the troponin I family. Expressed in salivary gland, gut, muscle and cuticle (at protein level).

In terms of biological role, inhibits endothelial cell proliferation and angiogenesis in a vertebrate host. Probably required for efficient blood feeding on vertebrate hosts. The polypeptide is Troponin I-like protein (Haemaphysalis longicornis (Bush tick)).